The sequence spans 370 residues: 4-hydroxy-3-methylbut-2-en-1-yl diphosphate synthase (flavodoxin) (370 aa).

Residues C270, C273, C305, and E312 each coordinate [4Fe-4S] cluster.

Belongs to the IspG family. [4Fe-4S] cluster is required as a cofactor.

The catalysed reaction is (2E)-4-hydroxy-3-methylbut-2-enyl diphosphate + oxidized [flavodoxin] + H2O + 2 H(+) = 2-C-methyl-D-erythritol 2,4-cyclic diphosphate + reduced [flavodoxin]. It participates in isoprenoid biosynthesis; isopentenyl diphosphate biosynthesis via DXP pathway; isopentenyl diphosphate from 1-deoxy-D-xylulose 5-phosphate: step 5/6. In terms of biological role, converts 2C-methyl-D-erythritol 2,4-cyclodiphosphate (ME-2,4cPP) into 1-hydroxy-2-methyl-2-(E)-butenyl 4-diphosphate. This is 4-hydroxy-3-methylbut-2-en-1-yl diphosphate synthase (flavodoxin) from Saccharophagus degradans (strain 2-40 / ATCC 43961 / DSM 17024).